The primary structure comprises 442 residues: Tubulin beta chain (442 aa).

Residues Q11, E69, S138, G142, T143, G144, N204, and N226 each coordinate GTP. Residue E69 coordinates Mg(2+).

It belongs to the tubulin family. In terms of assembly, dimer of alpha and beta chains. A typical microtubule is a hollow water-filled tube with an outer diameter of 25 nm and an inner diameter of 15 nM. Alpha-beta heterodimers associate head-to-tail to form protofilaments running lengthwise along the microtubule wall with the beta-tubulin subunit facing the microtubule plus end conferring a structural polarity. Microtubules usually have 13 protofilaments but different protofilament numbers can be found in some organisms and specialized cells. The cofactor is Mg(2+).

It localises to the cytoplasm. It is found in the cytoskeleton. In terms of biological role, tubulin is the major constituent of microtubules, a cylinder consisting of laterally associated linear protofilaments composed of alpha- and beta-tubulin heterodimers. Microtubules grow by the addition of GTP-tubulin dimers to the microtubule end, where a stabilizing cap forms. Below the cap, tubulin dimers are in GDP-bound state, owing to GTPase activity of alpha-tubulin. This Pneumocystis carinii protein is Tubulin beta chain (TUB-B).